Consider the following 150-residue polypeptide: Large ribosomal subunit protein bL9 (150 aa).

This sequence belongs to the bacterial ribosomal protein bL9 family.

Functionally, binds to the 23S rRNA. The protein is Large ribosomal subunit protein bL9 of Serratia proteamaculans (strain 568).